We begin with the raw amino-acid sequence, 103 residues long: Stefin-3 (103 aa).

A Secondary area of contact motif is present at residues 52-56 (QVVAG).

It belongs to the cystatin family.

It localises to the cytoplasm. Its function is as follows. This is an intracellular thiol proteinase inhibitor. This Mus musculus (Mouse) protein is Stefin-3 (Stfa3).